Reading from the N-terminus, the 352-residue chain is Small ribosomal subunit biogenesis GTPase RsgA (352 aa).

A compositionally biased stretch (basic residues) spans 1-21 (MKKNKLSKNQHRRIQAHHQYR). The segment at 1–38 (MKKNKLSKNQHRRIQAHHQYRLHPTSLTDDKNNQLDDA) is disordered. The CP-type G domain occupies 116 to 278 (FYDGIKPMAA…LIDSPGIREF (163 aa)). GTP is bound by residues 164–167 (NKID) and 218–226 (GQSGVGKSS). Zn(2+) contacts are provided by Cys-302, Cys-307, His-309, and Cys-315.

It belongs to the TRAFAC class YlqF/YawG GTPase family. RsgA subfamily. In terms of assembly, monomer. Associates with 30S ribosomal subunit, binds 16S rRNA. Zn(2+) serves as cofactor.

Its subcellular location is the cytoplasm. Its function is as follows. One of several proteins that assist in the late maturation steps of the functional core of the 30S ribosomal subunit. Helps release RbfA from mature subunits. May play a role in the assembly of ribosomal proteins into the subunit. Circularly permuted GTPase that catalyzes slow GTP hydrolysis, GTPase activity is stimulated by the 30S ribosomal subunit. The polypeptide is Small ribosomal subunit biogenesis GTPase RsgA (Hamiltonella defensa subsp. Acyrthosiphon pisum (strain 5AT)).